The sequence spans 632 residues: Probable potassium transport system protein Kup 1 (632 aa).

The next 12 helical transmembrane spans lie at Leu-19–Leu-39, Val-59–Val-79, Val-110–Pro-130, Pro-146–Ile-166, Phe-178–Val-198, Ile-213–Val-233, Trp-256–Leu-276, Met-298–Phe-318, Ile-346–Phe-366, Ala-373–Val-393, Pro-403–Ala-423, and Val-428–Thr-448.

This sequence belongs to the HAK/KUP transporter (TC 2.A.72) family.

Its subcellular location is the cell inner membrane. It catalyses the reaction K(+)(in) + H(+)(in) = K(+)(out) + H(+)(out). Functionally, transport of potassium into the cell. Likely operates as a K(+):H(+) symporter. This is Probable potassium transport system protein Kup 1 from Cupriavidus necator (strain ATCC 17699 / DSM 428 / KCTC 22496 / NCIMB 10442 / H16 / Stanier 337) (Ralstonia eutropha).